We begin with the raw amino-acid sequence, 381 residues long: Cytosolic acyl coenzyme A thioester hydrolase (381 aa).

In terms of domain architecture, HotDog ACOT-type 1 spans 51–169; the sequence is LGHCVTMGRI…TLWYVPLSLK (119 aa). N67 is a catalytic residue. K169 and K199 each carry N6-acetyllysine. One can recognise a HotDog ACOT-type 2 domain in the interval 225–339; sequence SYSQSSLIHL…FFTYVSLNQE (115 aa). D256 is a catalytic residue. K284 carries the post-translational modification N6-acetyllysine. The disordered stretch occupies residues 342–381; it reads PMPVPQLVPETEDEKKRFEEGKGRYLQMKAKRQGHTEPQP. The span at 354-364 shows a compositional bias: basic and acidic residues; sequence DEKKRFEEGKG.

Homohexamer. As to expression, widely expressed with highest levels in brain. High levels also found in thymus, large intestine and testis. Negligible in muscle and adipose tissue. In the central and peripheral nervous systems, displays a predominantly neuronal localization with highest expression in cell bodies and neurites.

Its subcellular location is the cytoplasm. It localises to the cytosol. It carries out the reaction hexadecanoyl-CoA + H2O = hexadecanoate + CoA + H(+). The enzyme catalyses dodecanoyl-CoA + H2O = dodecanoate + CoA + H(+). The catalysed reaction is tetradecanoyl-CoA + H2O = tetradecanoate + CoA + H(+). It catalyses the reaction decanoyl-CoA + H2O = decanoate + CoA + H(+). It carries out the reaction octanoyl-CoA + H2O = octanoate + CoA + H(+). The enzyme catalyses octadecanoyl-CoA + H2O = octadecanoate + CoA + H(+). The catalysed reaction is (9Z)-octadecenoyl-CoA + H2O = (9Z)-octadecenoate + CoA + H(+). Its pathway is lipid metabolism; fatty acid metabolism. Functionally, catalyzes the hydrolysis of acyl-CoAs into free fatty acids and coenzyme A (CoASH), regulating their respective intracellular levels. Preferentially hydrolyzes palmitoyl-CoA, but has a broad specificity acting on other fatty acyl-CoAs with chain-lengths of C8-C18. May play an important physiological function in brain. In Mus musculus (Mouse), this protein is Cytosolic acyl coenzyme A thioester hydrolase (Acot7).